Reading from the N-terminus, the 220-residue chain is ATP-dependent Clp protease proteolytic subunit (220 aa).

The active-site Nucleophile is Ser122. Residue His147 is part of the active site.

The protein belongs to the peptidase S14 family. In terms of assembly, fourteen ClpP subunits assemble into 2 heptameric rings which stack back to back to give a disk-like structure with a central cavity, resembling the structure of eukaryotic proteasomes.

Its subcellular location is the cytoplasm. The enzyme catalyses Hydrolysis of proteins to small peptides in the presence of ATP and magnesium. alpha-casein is the usual test substrate. In the absence of ATP, only oligopeptides shorter than five residues are hydrolyzed (such as succinyl-Leu-Tyr-|-NHMec, and Leu-Tyr-Leu-|-Tyr-Trp, in which cleavage of the -Tyr-|-Leu- and -Tyr-|-Trp bonds also occurs).. Functionally, cleaves peptides in various proteins in a process that requires ATP hydrolysis. Has a chymotrypsin-like activity. Plays a major role in the degradation of misfolded proteins. The protein is ATP-dependent Clp protease proteolytic subunit of Colwellia psychrerythraea (strain 34H / ATCC BAA-681) (Vibrio psychroerythus).